The chain runs to 280 residues: Acetylglutamate kinase (280 aa).

Substrate-binding positions include 64–65 (GG), R86, and N177.

This sequence belongs to the acetylglutamate kinase family. ArgB subfamily.

Its subcellular location is the cytoplasm. It catalyses the reaction N-acetyl-L-glutamate + ATP = N-acetyl-L-glutamyl 5-phosphate + ADP. It functions in the pathway amino-acid biosynthesis; L-arginine biosynthesis; N(2)-acetyl-L-ornithine from L-glutamate: step 2/4. Its function is as follows. Catalyzes the ATP-dependent phosphorylation of N-acetyl-L-glutamate. In Nautilia profundicola (strain ATCC BAA-1463 / DSM 18972 / AmH), this protein is Acetylglutamate kinase.